The chain runs to 797 residues: Protocadherin beta-9 (797 aa).

Residues 1–26 form the signal peptide; it reads MKTRGFSFPRQRQVLFLFLFWGVSLA. The Extracellular portion of the chain corresponds to 27 to 690; that stretch reads GSGFGRYSVT…AQADSLTVYL (664 aa). 5 Cadherin domains span residues 35–133, 138–242, 247–347, 352–451, and 456–561; these read VTEE…SPVF, MVLK…APQF, YETQ…PPEL, LSNS…APAF, and YTLF…SPFV. Residue N169 is glycosylated (N-linked (GlcNAc...) asparagine). N-linked (GlcNAc...) asparagine glycosylation occurs at N418. Residue N567 is glycosylated (N-linked (GlcNAc...) asparagine). One can recognise a Cadherin 6 domain in the interval 568 to 671; it reads GSAPCTELVP…LVDGFSQPYL (104 aa). The helical transmembrane segment at 691 to 711 threads the bilayer; sequence VVALASVSSLFLLSVLLFVAV. Topologically, residues 712-797 are cytoplasmic; sequence RLCRRSRAAS…TLHNSFGFNY (86 aa).

The protein localises to the cell membrane. In terms of biological role, potential calcium-dependent cell-adhesion protein. May be involved in the establishment and maintenance of specific neuronal connections in the brain. The polypeptide is Protocadherin beta-9 (PCDHB9) (Pan troglodytes (Chimpanzee)).